The sequence spans 473 residues: Photosystem II CP43 reaction center protein (473 aa).

The propeptide occupies 1–14 (MKTLYSLRRFYPVE). At T15 the chain carries N-acetylthreonine. Residue T15 is modified to Phosphothreonine. 5 helical membrane passes run 69 to 93 (LFEV…PHLA), 134 to 155 (LLGP…KDRN), 178 to 200 (KALY…RKIT), 255 to 275 (KPFA…LSYS), and 291 to 312 (WFNN…ASQA). E367 serves as a coordination point for [CaMn4O5] cluster. The chain crosses the membrane as a helical span at residues 447–471 (RARAAAAGFEKGIDRDFEPVLSMTP).

This sequence belongs to the PsbB/PsbC family. PsbC subfamily. In terms of assembly, PSII is composed of 1 copy each of membrane proteins PsbA, PsbB, PsbC, PsbD, PsbE, PsbF, PsbH, PsbI, PsbJ, PsbK, PsbL, PsbM, PsbT, PsbX, PsbY, PsbZ, Psb30/Ycf12, at least 3 peripheral proteins of the oxygen-evolving complex and a large number of cofactors. It forms dimeric complexes. Binds multiple chlorophylls and provides some of the ligands for the Ca-4Mn-5O cluster of the oxygen-evolving complex. It may also provide a ligand for a Cl- that is required for oxygen evolution. PSII binds additional chlorophylls, carotenoids and specific lipids. serves as cofactor.

The protein resides in the plastid. It localises to the chloroplast thylakoid membrane. Its function is as follows. One of the components of the core complex of photosystem II (PSII). It binds chlorophyll and helps catalyze the primary light-induced photochemical processes of PSII. PSII is a light-driven water:plastoquinone oxidoreductase, using light energy to abstract electrons from H(2)O, generating O(2) and a proton gradient subsequently used for ATP formation. This chain is Photosystem II CP43 reaction center protein, found in Amborella trichopoda.